Consider the following 408-residue polypeptide: Biphenyl dioxygenase system ferredoxin--NAD(+) reductase component (408 aa).

An FAD-binding site is contributed by T4–D35. An NAD(+)-binding site is contributed by S145–E173.

It belongs to the bacterial ring-hydroxylating dioxygenase ferredoxin reductase family. As to quaternary structure, this dioxygenase system consists of four proteins: the two subunits of the hydroxylase component (BphA and BphE), a ferredoxin (BphF) and a ferredoxin reductase (BphG). FAD is required as a cofactor.

It catalyses the reaction 2 reduced [2Fe-2S]-[ferredoxin] + NAD(+) + H(+) = 2 oxidized [2Fe-2S]-[ferredoxin] + NADH. The protein operates within xenobiotic degradation; biphenyl degradation. In terms of biological role, part of the electron transfer component of biphenyl dioxygenase, transfers electrons from ferredoxin (BphF) to NADH. The chain is Biphenyl dioxygenase system ferredoxin--NAD(+) reductase component (bphG) from Paraburkholderia xenovorans (strain LB400).